The primary structure comprises 2067 residues: Negative regulator of mitosis (2067 aa).

A compositionally biased stretch (polar residues) spans 100 to 118 (SLAIPQTTSQQSNRPSGSE). 3 disordered regions span residues 100 to 132 (SLAI…STSK), 332 to 408 (ESIP…DDFA), and 452 to 480 (GSQS…GFNP). Positions 336–347 (SHRKKKRRDTGG) match the Nuclear localization signal motif. A compositionally biased stretch (basic residues) spans 336–355 (SHRKKKRRDTGGTRSKRRSS). Positions 384–396 (WNASVMSHSQYST) are enriched in polar residues. 4 PC repeats span residues 1434–1465 (AGIM…ADQE), 1482–1520 (AAGF…TKNV), 1532–1562 (GATI…TVRF), and 1625–1659 (GLCF…ISRL). Residues 2020 to 2042 (FPSESDEEKRDRQETGSMPSSGH) are disordered.

This sequence belongs to the APC1 family.

Functionally, negative regulator of mitosis in E.nidulans. This protein is part of a regulatory pathway that includes the nimA protein kinase. It is required to prevent premature entry into mitosis. Mutations to this protein both cause cells to enter mitosis and prevent them from leaving mitosis. The protein is Negative regulator of mitosis (bimE) of Emericella nidulans (strain FGSC A4 / ATCC 38163 / CBS 112.46 / NRRL 194 / M139) (Aspergillus nidulans).